The sequence spans 126 residues: Holo-[acyl-carrier-protein] synthase (126 aa).

The Mg(2+) site is built by Asp-9 and Glu-58.

Belongs to the P-Pant transferase superfamily. AcpS family. It depends on Mg(2+) as a cofactor.

It localises to the cytoplasm. It catalyses the reaction apo-[ACP] + CoA = holo-[ACP] + adenosine 3',5'-bisphosphate + H(+). Its function is as follows. Transfers the 4'-phosphopantetheine moiety from coenzyme A to a Ser of acyl-carrier-protein. The polypeptide is Holo-[acyl-carrier-protein] synthase (Vibrio campbellii (strain ATCC BAA-1116)).